A 755-amino-acid polypeptide reads, in one-letter code: Polyribonucleotide nucleotidyltransferase (755 aa).

Residues aspartate 527 and aspartate 533 each coordinate Mg(2+). A KH domain is found at 593 to 652 (PRITTIKVPVDKIGEVIGPKGKMINSITEETGANISIEDDGTVFVGAADGASAQAAIDKI). An S1 motif domain is found at 664-733 (GERFLGTVVK…NRGKISLVPV (70 aa)). A disordered region spans residues 734–755 (GEEDAAEAPAPAEAQPADAVTQ). Residues 740 to 755 (EAPAPAEAQPADAVTQ) are compositionally biased toward low complexity.

It belongs to the polyribonucleotide nucleotidyltransferase family. Mg(2+) serves as cofactor.

Its subcellular location is the cytoplasm. The catalysed reaction is RNA(n+1) + phosphate = RNA(n) + a ribonucleoside 5'-diphosphate. Its function is as follows. Involved in mRNA degradation. Catalyzes the phosphorolysis of single-stranded polyribonucleotides processively in the 3'- to 5'-direction. The sequence is that of Polyribonucleotide nucleotidyltransferase from Mycobacteroides abscessus (strain ATCC 19977 / DSM 44196 / CCUG 20993 / CIP 104536 / JCM 13569 / NCTC 13031 / TMC 1543 / L948) (Mycobacterium abscessus).